Reading from the N-terminus, the 229-residue chain is Potassium/proton antiporter CemA (229 aa).

2 consecutive transmembrane segments (helical) span residues 7 to 27 (LASLRYLACLVFLPWGISISF) and 106 to 126 (IISHLLANFICFATPGAYFIL).

This sequence belongs to the CemA family.

The protein localises to the plastid. Its subcellular location is the chloroplast inner membrane. The catalysed reaction is K(+)(in) + H(+)(out) = K(+)(out) + H(+)(in). In terms of biological role, contributes to K(+)/H(+) antiport activity by supporting proton efflux to control proton extrusion and homeostasis in chloroplasts in a light-dependent manner to modulate photosynthesis. Prevents excessive induction of non-photochemical quenching (NPQ) under continuous-light conditions. Indirectly promotes efficient inorganic carbon uptake into chloroplasts. This chain is Potassium/proton antiporter CemA, found in Cycas taitungensis (Prince sago).